The sequence spans 378 residues: Transmembrane protein adipocyte-associated 1 homolog (378 aa).

N-linked (GlcNAc...) asparagine glycosylation is found at Asn16, Asn25, and Asn36. Helical transmembrane passes span 61 to 81 (VMLL…LPSA), 88 to 108 (TSSP…AVGI), 136 to 156 (FFLL…GHLE), 164 to 184 (VLAI…TLEI), 205 to 225 (HFWL…VILP), 247 to 267 (ILAL…ADII), and 278 to 298 (FLYF…GFFG). Residues 316–335 (DSDVHLPHTSSSGLGRKDLD) are disordered.

Belongs to the UPF0359 family.

The protein localises to the membrane. This Danio rerio (Zebrafish) protein is Transmembrane protein adipocyte-associated 1 homolog (tpra1).